Reading from the N-terminus, the 197-residue chain is MFDRELEAFGFEKTDDLIKIVPPDLFAELCQQSVQHLQRQRSGVDCQVIFQSFQAAGVLISEDELRKIIRWITTLFSTAAKYNVTCEELLSRLISKLPKQILQVIRHVWNEEGKRLSELEKSRDLLPSGELVDFQWKIGMAVSSDSCRSLNHPYVTIELKVADYSGQITSKVFELTIPEFQNFHKQVKEMSSVLETV.

The COMM domain occupies 130-197 (ELVDFQWKIG…KEMSSVLETV (68 aa)).

This sequence belongs to the COMM domain-containing protein 6 family. As to quaternary structure, component of the commander complex consisting of the CCC subcomplex and the retriever subcomplex. Component of the CCC subcomplex.

It is found in the nucleus. Its subcellular location is the cytoplasm. Scaffold protein in the commander complex that is essential for endosomal recycling of transmembrane cargos; the commander complex is composed of the CCC subcomplex and the retriever subcomplex. May modulate activity of cullin-RING E3 ubiquitin ligase (CRL) complexes. Down-regulates activation of NF-kappa-B. Inhibits TNF-induced NFKB1 activation. In Xenopus tropicalis (Western clawed frog), this protein is COMM domain-containing protein 6 (commd6).